Reading from the N-terminus, the 518-residue chain is Arginyl-tRNA--protein transferase 1 (518 aa).

Basic and acidic residues predominate over residues 149 to 165; the sequence is ESLQSEGKNSKKEEPHE. The tract at residues 149–207 is disordered; sequence ESLQSEGKNSKKEEPHELLQSQDSVGEKLGSGEPSHSVKVHTVPKPGKGADLSKPPCRK. Ser169 is modified (phosphoserine).

It belongs to the R-transferase family. As to quaternary structure, monomer. Interacts with LIAT1; LIAT1 is not a substrate of ATE1, the interaction takes place in the cytoplasm and seems to increase ATE1 arginyltransferase activity.

It localises to the nucleus. It is found in the cytoplasm. The catalysed reaction is an N-terminal L-alpha-aminoacyl-[protein] + L-arginyl-tRNA(Arg) = an N-terminal L-arginyl-L-aminoacyl-[protein] + tRNA(Arg) + H(+). Its function is as follows. Involved in the post-translational conjugation of arginine to the N-terminal aspartate or glutamate of a protein. This arginylation is required for degradation of the protein via the ubiquitin pathway. Does not arginylate cysteine residues. The protein is Arginyl-tRNA--protein transferase 1 (ATE1) of Macaca fascicularis (Crab-eating macaque).